The sequence spans 787 residues: Endonuclease MutS2 (787 aa).

331-338 (GPNTGGKT) contributes to the ATP binding site. The Smr domain occupies 711–786 (IDVRGKTSDD…EQGVTVVELK (76 aa)).

The protein belongs to the DNA mismatch repair MutS family. MutS2 subfamily. Homodimer. Binds to stalled ribosomes, contacting rRNA.

Its function is as follows. Endonuclease that is involved in the suppression of homologous recombination and thus may have a key role in the control of bacterial genetic diversity. Acts as a ribosome collision sensor, splitting the ribosome into its 2 subunits. Detects stalled/collided 70S ribosomes which it binds and splits by an ATP-hydrolysis driven conformational change. Acts upstream of the ribosome quality control system (RQC), a ribosome-associated complex that mediates the extraction of incompletely synthesized nascent chains from stalled ribosomes and their subsequent degradation. Probably generates substrates for RQC. The chain is Endonuclease MutS2 from Caldicellulosiruptor bescii (strain ATCC BAA-1888 / DSM 6725 / KCTC 15123 / Z-1320) (Anaerocellum thermophilum).